The chain runs to 59 residues: Inner kinetochore subunit fta6 (59 aa).

Component of the inner kinetochore constitutive centromere-associated network (CCAN) (also known as central kinetochore Sim4 complex in fission yeast), which is composed of at least cnl2, cnp3, cnp20, fta1, fta2, fta3, fta4, fta6, fta7, mal2, mhf1, mhf2, mis6, mis15, mis17, sim4 and wip1.

The protein localises to the nucleus. It is found in the chromosome. Its subcellular location is the centromere. It localises to the kinetochore. The protein resides in the cytoplasm. The protein localises to the cytoskeleton. It is found in the microtubule organizing center. Its subcellular location is the spindle pole body. Functionally, component of the kinetochore, a multiprotein complex that assembles on centromeric DNA and attaches chromosomes to spindle microtubules, mediating chromosome segregation and sister chromatid segregation during meiosis and mitosis. Component of the inner kinetochore constitutive centromere-associated network (CCAN), which serves as a structural platform for outer kinetochore assembly. This is Inner kinetochore subunit fta6 (fta6) from Schizosaccharomyces pombe (strain 972 / ATCC 24843) (Fission yeast).